Here is a 581-residue protein sequence, read N- to C-terminus: Laccase-2 (581 aa).

The N-terminal stretch at 1–19 (MKYSTVFTALTALFAQASA) is a signal peptide. Plastocyanin-like domains are found at residues 74 to 191 (SVEN…GPAT) and 197 to 353 (DVGA…YDSS). N-linked (GlcNAc...) asparagine glycans are attached at residues Asn-77, Asn-93, and Asn-120. Residues His-125, His-127, His-169, and His-171 each coordinate Cu cation. Residues Cys-146 and Cys-562 are joined by a disulfide bond. N-linked (GlcNAc...) asparagine glycans are attached at residues Asn-232, Asn-283, Asn-343, Asn-408, Asn-427, and Asn-441. The region spanning 413–547 (LLDWSSPTTL…AMQFVESQSS (135 aa)) is the Plastocyanin-like 3 domain. Positions 464, 467, 469, 526, 527, 528, and 532 each coordinate Cu cation.

Belongs to the multicopper oxidase family. It depends on Cu cation as a cofactor.

Its subcellular location is the secreted. The enzyme catalyses 4 hydroquinone + O2 = 4 benzosemiquinone + 2 H2O. Functionally, lignin degradation and detoxification of lignin-derived products. This is Laccase-2 (lcc2) from Botryotinia fuckeliana (Noble rot fungus).